We begin with the raw amino-acid sequence, 1079 residues long: Eukaryotic translation initiation factor 5B (1079 aa).

Residues 1 to 478 (MGKKGKKSGY…QAAPAESNVS (478 aa)) form a disordered region. Over residues 22–38 (SGQNEYLDNTSQDSPQN) the composition is skewed to polar residues. Over residues 57–67 (SKKKKGKKNKG) the composition is skewed to basic residues. Phosphoserine occurs at positions 73, 77, and 82. Basic residues predominate over residues 105–114 (KKGKKGKKSK). Residue serine 127 is modified to Phosphoserine. The segment covering 160–169 (NNNESEAAAP) has biased composition (low complexity). Positions 173–192 (PEVRVKTKKEKEREKKEREK) are enriched in basic and acidic residues. Basic residues predominate over residues 193-204 (LRKKQQQAKKKG). The span at 207-233 (GEDTLASSEVSSEVDISTPAENDSSAK) shows a compositional bias: polar residues. Residues 253–293 (MLEEKRAREEEEQRIREEEARIAEEEKRLAEVEEARKEEAR) are compositionally biased toward basic and acidic residues. 2 stretches are compositionally biased toward low complexity: residues 321–334 (QQAL…QMLE) and 361–376 (RSGT…LESS). Residue threonine 364 is modified to Phosphothreonine. Residues 385-408 (EPQKDSKDDSEKVEKETEVERKEE) show a composition bias toward basic and acidic residues. Residues 409–431 (NEAEAEAVFDDWEAALEEPEVAE) show a composition bias toward acidic residues. Positions 436-466 (VTEKKETDIKSDAVEHSIKDKEDSKTDKVDD) are enriched in basic and acidic residues. In terms of domain architecture, tr-type G spans 482 to 700 (LRSPICCILG…LISLTQTRMS (219 aa)). The interval 491–498 (GHVDTGKT) is G1. 491-498 (GHVDTGKT) serves as a coordination point for GTP. A G2 region spans residues 516–520 (GITQQ). Positions 555–558 (DTPG) are G3. A G4 region spans residues 609–612 (NKVD). A G5 region spans residues 677 to 679 (SAQ).

The protein belongs to the TRAFAC class translation factor GTPase superfamily. Classic translation factor GTPase family. IF-2 subfamily. A monovalent cation serves as cofactor.

It localises to the cytoplasm. It catalyses the reaction GTP + H2O = GDP + phosphate + H(+). In terms of biological role, plays a role in translation initiation. Translational GTPase that catalyzes the joining of the 40S and 60S subunits to form the 80S initiation complex with the initiator methionine-tRNA in the P-site base paired to the start codon. GTP binding and hydrolysis induces conformational changes in the enzyme that renders it active for productive interactions with the ribosome. The release of the enzyme after formation of the initiation complex is a prerequisite to form elongation-competent ribosomes. This Schizosaccharomyces pombe (strain 972 / ATCC 24843) (Fission yeast) protein is Eukaryotic translation initiation factor 5B.